The following is a 282-amino-acid chain: Bicarbonate transport ATP-binding protein CmpD (282 aa).

Residues 24-257 (LTIENVSKVY…RPRDRDRIME (234 aa)) enclose the ABC transporter domain. ATP is bound at residue 60–67 (GHSGCGKS).

This sequence belongs to the ABC transporter superfamily. Nitrate/nitrite/cyanate uptake transporter (NitT) (TC 3.A.1.16) family. As to quaternary structure, the complex is composed of two ATP-binding proteins (CmpC and CmpD), a transmembrane protein (CmpB) and a solute-binding protein (CmpA).

It localises to the cell inner membrane. In terms of biological role, part of the ABC transporter complex CmpABCD involved in bicarbonate transport. Responsible for energy coupling to the transport system. This chain is Bicarbonate transport ATP-binding protein CmpD (cmpD), found in Synechocystis sp. (strain ATCC 27184 / PCC 6803 / Kazusa).